Consider the following 266-residue polypeptide: Ribosome-recycling factor, chloroplastic (266 aa).

A compositionally biased stretch (low complexity) spans 1–26 (MPPLHAVSPAAAAAPPRALSSAARVP). A disordered region spans residues 1–30 (MPPLHAVSPAAAAAPPRALSSAARVPQRPG). Residues 1–74 (MPPLHAVSPA…SDKRAVLRHA (74 aa)) constitute a chloroplast transit peptide. 2 coiled-coil regions span residues 75–109 (TIEE…NTVR) and 207–266 (VAIR…LMKI).

Belongs to the RRF family.

It localises to the plastid. The protein resides in the chloroplast. Functionally, responsible for the release of ribosomes from messenger RNA at the termination of chloroplastic protein biosynthesis. In Oryza sativa subsp. indica (Rice), this protein is Ribosome-recycling factor, chloroplastic.